The sequence spans 72 residues: Defensin-like protein 230 (72 aa).

The signal sequence occupies residues 1–27; the sequence is MEKKSLACLSFLLLVLFVAQEIVVSEA. Cystine bridges form between Cys-30–Cys-72, Cys-41–Cys-60, Cys-45–Cys-66, and Cys-49–Cys-68.

It belongs to the DEFL family.

Its subcellular location is the secreted. This Pisum sativum (Garden pea) protein is Defensin-like protein 230 (PI230).